The chain runs to 131 residues: Lactose permease (131 aa).

The Cytoplasmic portion of the chain corresponds to 1 to 13 (MKFSELAPRERHN). A helical transmembrane segment spans residues 14 to 34 (FVYFLLFFFFYHFIMSAYFPF). The Periplasmic portion of the chain corresponds to 35–50 (FPVWLADVNHLTKTET). Residues 51-71 (GIVFSSISLFAIIFQPVFGLM) form a helical membrane-spanning segment. Residues 72 to 80 (SDKLGLRKH) lie on the Cytoplasmic side of the membrane. Residues 81-101 (LLWTITVLLILFAPFFIFVFS) traverse the membrane as a helical segment. Position 102 (Pro-102) is a topological domain, periplasmic. Residues 103 to 123 (LLQMNIIAGSLVGGIYLGIVF) traverse the membrane as a helical segment. Over 124 to 131 (STAPGVGS) the chain is Cytoplasmic.

The protein belongs to the major facilitator superfamily. Oligosaccharide:H(+) symporter (OHS) (TC 2.A.1.5) family.

It is found in the cell inner membrane. The enzyme catalyses lactose(in) + H(+)(in) = lactose(out) + H(+)(out). In terms of biological role, responsible for transport of beta-galactosides into the cell, with the concomitant import of a proton (symport system). The sequence is that of Lactose permease (lacY) from Klebsiella pneumoniae.